The primary structure comprises 345 residues: Methylthioribose-1-phosphate isomerase (345 aa).

Substrate is bound by residues Arg47–Ala49, Arg90, and Gln197. Asp238 (proton donor) is an active-site residue. Asn248–Lys249 serves as a coordination point for substrate.

The protein belongs to the eIF-2B alpha/beta/delta subunits family. MtnA subfamily.

The enzyme catalyses 5-(methylsulfanyl)-alpha-D-ribose 1-phosphate = 5-(methylsulfanyl)-D-ribulose 1-phosphate. Its pathway is amino-acid biosynthesis; L-methionine biosynthesis via salvage pathway; L-methionine from S-methyl-5-thio-alpha-D-ribose 1-phosphate: step 1/6. Catalyzes the interconversion of methylthioribose-1-phosphate (MTR-1-P) into methylthioribulose-1-phosphate (MTRu-1-P). The protein is Methylthioribose-1-phosphate isomerase of Caldanaerobacter subterraneus subsp. tengcongensis (strain DSM 15242 / JCM 11007 / NBRC 100824 / MB4) (Thermoanaerobacter tengcongensis).